The chain runs to 97 residues: Large ribosomal subunit protein eL37 (97 aa).

An N6-acetyllysine modification is found at K10. 4 residues coordinate Zn(2+): C19, C22, C34, and C37. Residues 19-37 (CRRCGSKAYHLQKSTCGKC) form a C4-type zinc finger. S96 and S97 each carry phosphoserine.

It belongs to the eukaryotic ribosomal protein eL37 family. As to quaternary structure, component of the large ribosomal subunit.

The protein resides in the cytoplasm. Functionally, component of the large ribosomal subunit. The ribosome is a large ribonucleoprotein complex responsible for the synthesis of proteins in the cell. This is Large ribosomal subunit protein eL37 (RPL37) from Bos taurus (Bovine).